A 1046-amino-acid chain; its full sequence is Protein HBT1 (1046 aa).

Disordered regions lie at residues 1–455 (MNMN…AAEK), 469–894 (DYQQ…LGGA), and 908–1046 (PSLI…RSEI). Ser41 carries the phosphoserine modification. Residues 81–96 (KDSETPHEDTEADANR) show a composition bias toward basic and acidic residues. Composition is skewed to polar residues over residues 98-149 (ANVT…SPPT), 175-191 (IATTHNHSTSKAATSPV), and 228-301 (ANTG…NTDS). At Ser303 the chain carries Phosphoserine. Polar residues predominate over residues 327–341 (VYTSTGPKSNVSSGM). Phosphoserine is present on Ser363. Composition is skewed to polar residues over residues 389–408 (QTGLKNDQVSGSDAIQQQTM) and 420–429 (GFVSQQPSYH). The segment covering 430–455 (DSNKNIQHPEKNKVDNKNISERAAEK) has biased composition (basic and acidic residues). Polar residues predominate over residues 488 to 498 (YSSSAGKNKNL). Residue Ser491 is modified to Phosphoserine. Basic and acidic residues predominate over residues 529–538 (GHMKYNDNGR). Residues 548–559 (QAGSQNTNNNID) are compositionally biased toward polar residues. Ser561 carries the post-translational modification Phosphoserine. Residues 570–582 (GLSNDATTRNNVV) show a composition bias toward polar residues. The span at 586–597 (MKDEDMNEDSTK) shows a compositional bias: basic and acidic residues. The segment covering 605–619 (YLDDVEDYHENDIDD) has biased composition (acidic residues). Basic and acidic residues predominate over residues 621–630 (SNAKKNDLYS). Residue Ser671 is modified to Phosphoserine. Residues 742–756 (FTNNPETGTTGNVDT) are compositionally biased toward polar residues. The span at 773 to 782 (DDSKNTDTHL) shows a compositional bias: basic and acidic residues. Polar residues-rich tracts occupy residues 792–802 (NSRSGDTTYSK) and 837–855 (SSEQKASYGSGGNSQNQEY). Phosphotyrosine is present on Tyr855. Ser857 carries the post-translational modification Phosphoserine. Residues 868 to 890 (KVLEEDAPGYKREVDLKNKRRTD) are compositionally biased toward basic and acidic residues. Polar residues predominate over residues 922-951 (DTNTSSSQKPSEGTYPETTSYSIHNETTSQ). Over residues 952–963 (GRKVSVGSMGSG) the composition is skewed to low complexity. A compositionally biased stretch (basic residues) spans 964–976 (KSKHHHNHHRHSR). Ser1005 carries the phosphoserine modification. The span at 1006–1019 (DEGEQDYHDDEQGE) shows a compositional bias: acidic residues. Ser1034 bears the Phosphoserine mark.

In terms of assembly, conjugated with HUB1. HUB1 has not the classical C-terminal Gly residue, so it is still unknown how conjugation may occur.

The protein resides in the cytoplasm. In terms of biological role, polarity-determining protein which forms a conjugate with the ubiquitin-like modifier HUB1. Involved in bud site selection and cellular morphogenesis during conjugation. Required for survival during stationary phase. The protein is Protein HBT1 (HBT1) of Saccharomyces cerevisiae (strain ATCC 204508 / S288c) (Baker's yeast).